Consider the following 120-residue polypeptide: Putative membrane protein insertion efficiency factor (120 aa).

Positions 93–120 (GRSCQTDVDGANDDWNPASKRGERESFV) are disordered.

Belongs to the UPF0161 family.

The protein resides in the cell membrane. Functionally, could be involved in insertion of integral membrane proteins into the membrane. This chain is Putative membrane protein insertion efficiency factor, found in Mycobacterium bovis (strain ATCC BAA-935 / AF2122/97).